A 609-amino-acid chain; its full sequence is Autophagy-related protein 22-1 (609 aa).

4 helical membrane-spanning segments follow: residues 35 to 55, 117 to 137, 151 to 171, and 176 to 196; these read YGWA…PITL, TASF…ILII, LLLM…LGVV, and MVGA…FVLL. The span at 214–231 shows a compositional bias: basic and acidic residues; sequence AREPRPALDDSRAQEGHS. The interval 214–240 is disordered; it reads AREPRPALDDSRAQEGHSDTTNGIEHG. A glycan (N-linked (GlcNAc...) asparagine) is linked at Asn-244. Residues 287–307 form a helical membrane-spanning segment; it reads IGIGYIGAIILQIVCILVVIA. Asn-309 is a glycosylation site (N-linked (GlcNAc...) asparagine). Transmembrane regions (helical) follow at residues 317–337, 381–401, and 415–435; these read LVLF…ALWL, ILLF…VSGT, and AALG…AFSW. An N-linked (GlcNAc...) asparagine glycan is attached at Asn-443. Transmembrane regions (helical) follow at residues 450–470, 477–497, 522–542, and 552–572; these read IIAC…GFIP, FLGL…GLVM, ALYA…VGII, and AFVF…LVDV.

Belongs to the ATG22 family.

It localises to the vacuole membrane. Its function is as follows. Vacuolar effluxer which mediate the efflux of amino acids resulting from autophagic degradation. The release of autophagic amino acids allows the maintenance of protein synthesis and viability during nitrogen starvation. The polypeptide is Autophagy-related protein 22-1 (atg22-1) (Aspergillus fumigatus (strain ATCC MYA-4609 / CBS 101355 / FGSC A1100 / Af293) (Neosartorya fumigata)).